We begin with the raw amino-acid sequence, 623 residues long: Pyranose 2-oxidase (623 aa).

The first 27 residues, 1–27 (MSTSSSDPFFNFTKSSFRSAAAQKASA), serve as a signal peptide directing secretion. The propeptide occupies 28-38 (TSLPPLPGPDK). A Tele-8alpha-FAD histidine modification is found at H167. Residues Q448 and H450 each coordinate substrate. The Proton acceptor role is filled by H548. The active site involves N593.

This sequence belongs to the GMC oxidoreductase family. As to quaternary structure, homotetramer. It depends on FAD as a cofactor. Not glycosylated.

It localises to the periplasm. It catalyses the reaction D-glucose + O2 = 2-dehydro-D-glucose + H2O2. In terms of biological role, catalyzes the oxidation of various aldopyranoses and disaccharides on carbon-2 to the corresponding 2-keto sugars concomitant with the reduction of O(2) to H(2)O(2). Plays an important role in lignin degradation of wood rot fungi by supplying the essential cosubstrate H(2)O(2) for the ligninolytic peroxidases, lignin peroxidase and manganese-dependent peroxidase. The preferred substrate is D-glucose which is converted to 2-dehydro-D-glucose. Also acts on D-xylose, together with D-glucose the major sugars derived from wood, on L-sorbose, D-galactose and 1,5-anhydroglucitol, a diagnostic marker of diabetes mellitus. This is Pyranose 2-oxidase (P2OX) from Trametes versicolor (White-rot fungus).